Consider the following 466-residue polypeptide: Glutamate decarboxylase beta (466 aa).

T62 and N83 together coordinate substrate. Pyridoxal 5'-phosphate is bound by residues 126-127 (SS), T212, and H275. N6-(pyridoxal phosphate)lysine is present on K276. An N6-acetyllysine mark is found at K446, K453, and K464.

This sequence belongs to the group II decarboxylase family. Homohexamer composed of three dimers. The cofactor is pyridoxal 5'-phosphate.

The enzyme catalyses L-glutamate + H(+) = 4-aminobutanoate + CO2. Its function is as follows. Converts glutamate to gamma-aminobutyrate (GABA), consuming one intracellular proton in the reaction. The gad system helps to maintain a near-neutral intracellular pH when cells are exposed to extremely acidic conditions. The ability to survive transit through the acidic conditions of the stomach is essential for successful colonization of the mammalian host by commensal and pathogenic bacteria. This chain is Glutamate decarboxylase beta (gadB), found in Shigella flexneri.